The following is a 304-amino-acid chain: MIRDTKQPIKVPAKPASRSGGKAKTVKPKTVKPKAVKAADGKAASAKASTSKAAVSKTSAKAAAAKPASAKGLKGVIAMAPPSFRRERALIKRGIWPIAGCDEAGRGPLAGPVVAAAVVLDPKRVPKGLDDSKRLSAEKREALFEEICATAQVSVVYASPERINRDNILRASLWALTRAVHALPDLPRHVFVDGRDRLATQCDCEAVIGGDGLIASIAAASIIAKVSRDRLMCKLAEQCPGYGFEQHKGYGVPEHLDALARLGPTVHHRRFFAPVAAAWQKIEGAPQPQIRDLFEADVTVEATA.

Residues 1 to 53 (MIRDTKQPIKVPAKPASRSGGKAKTVKPKTVKPKAVKAADGKAASAKASTSKA) form a disordered region. Residues 24 to 35 (KTVKPKTVKPKA) are compositionally biased toward basic residues. The segment covering 36–53 (VKAADGKAASAKASTSKA) has biased composition (low complexity). The RNase H type-2 domain occupies 96-284 (WPIAGCDEAG…VAAAWQKIEG (189 aa)). The a divalent metal cation site is built by D102, E103, and D193.

Belongs to the RNase HII family. It depends on Mn(2+) as a cofactor. Mg(2+) is required as a cofactor.

The protein resides in the cytoplasm. It catalyses the reaction Endonucleolytic cleavage to 5'-phosphomonoester.. Functionally, endonuclease that specifically degrades the RNA of RNA-DNA hybrids. The sequence is that of Ribonuclease HII from Rhodopseudomonas palustris (strain ATCC BAA-98 / CGA009).